Reading from the N-terminus, the 220-residue chain is Aspartic protease inhibitor 8 (220 aa).

Residues 1 to 23 form the signal peptide; that stretch reads MMKCLFLLCLCLLPIVVFSSTFT. A propeptide spanning residues 24-32 is cleaved from the precursor; it reads SQNLIDLPS. 2 disulfide bridges follow: Cys-80/Cys-125 and Cys-174/Cys-185.

The protein belongs to the protease inhibitor I3 (leguminous Kunitz-type inhibitor) family.

It is found in the vacuole. Functionally, inhibitor of cathepsin D (aspartic protease) and trypsin (serine protease). May protect the plant by inhibiting proteases of invading organisms. In Solanum tuberosum (Potato), this protein is Aspartic protease inhibitor 8.